The chain runs to 637 residues: Chaperone protein DnaK (637 aa).

Phosphothreonine; by autocatalysis is present on Thr-198. The tract at residues 600–637 is disordered; the sequence is IAQQQAQAQQAQGADAGAQSKDDDVVDAEFEEVKDDKK. Positions 601–618 are enriched in low complexity; it reads AQQQAQAQQAQGADAGAQ. A compositionally biased stretch (acidic residues) spans 623–637; the sequence is DVVDAEFEEVKDDKK.

This sequence belongs to the heat shock protein 70 family.

In terms of biological role, acts as a chaperone. The sequence is that of Chaperone protein DnaK from Vibrio parahaemolyticus serotype O3:K6 (strain RIMD 2210633).